The sequence spans 518 residues: Membrane-bound lytic murein transglycosylase F (518 aa).

The first 21 residues, 1–21 (MKKLKINYLFIGILALLLAVA), serve as a signal peptide directing secretion. A non-LT domain region spans residues 22–269 (LWPSIPWFGK…RIEEKYLGHG (248 aa)). Residues 270–518 (DDFDYVDTRT…SRKGSEEKQN (249 aa)) are LT domain. Residue Glu314 is part of the active site.

It in the N-terminal section; belongs to the bacterial solute-binding protein 3 family. The protein in the C-terminal section; belongs to the transglycosylase Slt family.

It is found in the cell outer membrane. The enzyme catalyses Exolytic cleavage of the (1-&gt;4)-beta-glycosidic linkage between N-acetylmuramic acid (MurNAc) and N-acetylglucosamine (GlcNAc) residues in peptidoglycan, from either the reducing or the non-reducing ends of the peptidoglycan chains, with concomitant formation of a 1,6-anhydrobond in the MurNAc residue.. Murein-degrading enzyme that degrades murein glycan strands and insoluble, high-molecular weight murein sacculi, with the concomitant formation of a 1,6-anhydromuramoyl product. Lytic transglycosylases (LTs) play an integral role in the metabolism of the peptidoglycan (PG) sacculus. Their lytic action creates space within the PG sacculus to allow for its expansion as well as for the insertion of various structures such as secretion systems and flagella. The protein is Membrane-bound lytic murein transglycosylase F of Shigella boydii serotype 18 (strain CDC 3083-94 / BS512).